Here is a 445-residue protein sequence, read N- to C-terminus: Methionine aminopeptidase 2-1 (445 aa).

The interval 1–86 is disordered; that stretch reads MAAQASEDLQ…VQSEPPRVPL (86 aa). Acidic residues predominate over residues 34-46; the sequence is GEAEDDSDDDADE. A compositionally biased stretch (basic residues) spans 59-74; the sequence is AKKKKKRKSKKKKKGG. Residue His-198 participates in substrate binding. Residues Asp-218, Asp-229, and His-298 each contribute to the a divalent metal cation site. His-306 is a binding site for substrate. The a divalent metal cation site is built by Glu-331 and Glu-426.

This sequence belongs to the peptidase M24A family. Methionine aminopeptidase eukaryotic type 2 subfamily. Co(2+) serves as cofactor. Requires Zn(2+) as cofactor. Mn(2+) is required as a cofactor. It depends on Fe(2+) as a cofactor.

It localises to the cytoplasm. The enzyme catalyses Release of N-terminal amino acids, preferentially methionine, from peptides and arylamides.. Functionally, cotranslationally removes the N-terminal methionine from nascent proteins. The N-terminal methionine is often cleaved when the second residue in the primary sequence is small and uncharged (Met-Ala-, Cys, Gly, Pro, Ser, Thr, or Val). This Aspergillus flavus (strain ATCC 200026 / FGSC A1120 / IAM 13836 / NRRL 3357 / JCM 12722 / SRRC 167) protein is Methionine aminopeptidase 2-1.